We begin with the raw amino-acid sequence, 565 residues long: Salicyl-AMP ligase / salicyl-S-ArCP synthetase (565 aa).

ATP contacts are provided by glycine 214, glycine 330, valine 352, aspartate 436, arginine 451, and lysine 542.

It belongs to the ATP-dependent AMP-binding enzyme family.

The catalysed reaction is salicylate + ATP + H(+) = 2-hydroxybenzoyl-5'-AMP + diphosphate. It catalyses the reaction 2-hydroxybenzoyl-5'-AMP + holo-[ACP] = salicyl-[ACP] + AMP + H(+). The protein operates within siderophore biosynthesis; mycobactin biosynthesis. Inhibited by salicyl-AMS, an acyl-AMP analog. Also inhibited by 5'-O-[(N-acyl)sulfamoyl]adenosines. Functionally, involved in the initial steps of the mycobactin biosynthetic pathway. Catalyzes the salicylation of the aryl carrier protein (ArCP) domain of MbtB through a two-step reaction. The first step is the ATP-dependent adenylation of salicylate to generate a salicyl-AMP intermediate. The second step is the transfer of this activated salicylate to MbtB to form a salicyl-ArCP domain thioester. This chain is Salicyl-AMP ligase / salicyl-S-ArCP synthetase, found in Mycobacterium tuberculosis (strain ATCC 25618 / H37Rv).